A 985-amino-acid chain; its full sequence is Protein psiQ (985 aa).

The first 20 residues, 1–20 (MMKYIYILLIFSLLFLKINS), serve as a signal peptide directing secretion. The PA14 domain maps to 102-247 (QSTTNPNVYA…YDECGVCQGD (146 aa)). N-linked (GlcNAc...) asparagine glycans are attached at residues asparagine 127, asparagine 309, asparagine 424, asparagine 491, asparagine 517, asparagine 527, asparagine 592, asparagine 620, asparagine 649, asparagine 696, asparagine 735, asparagine 767, asparagine 786, asparagine 824, and asparagine 842.

Belongs to the prespore-cell-inducing factor family.

Its subcellular location is the secreted. This Dictyostelium discoideum (Social amoeba) protein is Protein psiQ (psiQ).